We begin with the raw amino-acid sequence, 56 residues long: Large ribosomal subunit protein eL40 (56 aa).

The protein belongs to the eukaryotic ribosomal protein eL40 family.

The sequence is that of Large ribosomal subunit protein eL40 from Metallosphaera sedula (strain ATCC 51363 / DSM 5348 / JCM 9185 / NBRC 15509 / TH2).